We begin with the raw amino-acid sequence, 78 residues long: Dihydrofolate reductase type 2 (78 aa).

NADP(+) contacts are provided by residues 32–36 and 66–69; these read KKSGA and VQIY. Isoleucine 68 is a substrate binding site.

In terms of assembly, homotetramer.

It catalyses the reaction (6S)-5,6,7,8-tetrahydrofolate + NADP(+) = 7,8-dihydrofolate + NADPH + H(+). The protein operates within cofactor biosynthesis; tetrahydrofolate biosynthesis; 5,6,7,8-tetrahydrofolate from 7,8-dihydrofolate: step 1/1. Key enzyme in folate metabolism. Catalyzes an essential reaction for de novo glycine and purine synthesis, and for DNA precursor synthesis. In Escherichia coli, this protein is Dihydrofolate reductase type 2.